Here is a 1415-residue protein sequence, read N- to C-terminus: DNA-directed RNA polymerase subunit beta' (1415 aa).

The Zn(2+) site is built by Cys-72, Cys-74, Cys-87, and Cys-90. Mg(2+)-binding residues include Asp-463, Asp-465, and Asp-467. Zn(2+) is bound by residues Cys-811, Cys-885, Cys-892, and Cys-895.

Belongs to the RNA polymerase beta' chain family. In terms of assembly, the RNAP catalytic core consists of 2 alpha, 1 beta, 1 beta' and 1 omega subunit. When a sigma factor is associated with the core the holoenzyme is formed, which can initiate transcription. Requires Mg(2+) as cofactor. The cofactor is Zn(2+).

The catalysed reaction is RNA(n) + a ribonucleoside 5'-triphosphate = RNA(n+1) + diphosphate. Its function is as follows. DNA-dependent RNA polymerase catalyzes the transcription of DNA into RNA using the four ribonucleoside triphosphates as substrates. This Cereibacter sphaeroides (strain ATCC 17025 / ATH 2.4.3) (Rhodobacter sphaeroides) protein is DNA-directed RNA polymerase subunit beta'.